Consider the following 35-residue polypeptide: Photosystem II reaction center protein T (35 aa).

The chain crosses the membrane as a helical span at residues 3 to 23; the sequence is SVAYILIFTLCIGTIFFAIAF.

The protein belongs to the PsbT family. In terms of assembly, PSII is composed of 1 copy each of membrane proteins PsbA, PsbB, PsbC, PsbD, PsbE, PsbF, PsbH, PsbI, PsbJ, PsbK, PsbL, PsbM, PsbT, PsbX, PsbY, PsbZ, Psb30/Ycf12, peripheral proteins PsbO, CyanoQ (PsbQ), PsbU, PsbV and a large number of cofactors. It forms dimeric complexes.

Its subcellular location is the cellular thylakoid membrane. Found at the monomer-monomer interface of the photosystem II (PS II) dimer, plays a role in assembly and dimerization of PSII. PSII is a light-driven water plastoquinone oxidoreductase, using light energy to abstract electrons from H(2)O, generating a proton gradient subsequently used for ATP formation. This is Photosystem II reaction center protein T from Nostoc punctiforme (strain ATCC 29133 / PCC 73102).